Consider the following 518-residue polypeptide: Putative malate dehydrogenase 1B (518 aa).

Belongs to the LDH/MDH superfamily. MDH type 2 family.

This chain is Putative malate dehydrogenase 1B (MDH1B), found in Homo sapiens (Human).